A 643-amino-acid chain; its full sequence is Threonine--tRNA ligase (643 aa).

In terms of domain architecture, TGS spans 1-61; sequence MIEIFIEDLN…NQSGNLKFLK (61 aa). The interval 246-539 is catalytic; sequence DHRKIGKDLE…LLEHYAGFLP (294 aa). Cysteine 339, histidine 390, and histidine 516 together coordinate Zn(2+).

This sequence belongs to the class-II aminoacyl-tRNA synthetase family. Homodimer. The cofactor is Zn(2+).

It localises to the cytoplasm. It catalyses the reaction tRNA(Thr) + L-threonine + ATP = L-threonyl-tRNA(Thr) + AMP + diphosphate + H(+). Its function is as follows. Catalyzes the attachment of threonine to tRNA(Thr) in a two-step reaction: L-threonine is first activated by ATP to form Thr-AMP and then transferred to the acceptor end of tRNA(Thr). Also edits incorrectly charged L-seryl-tRNA(Thr). This chain is Threonine--tRNA ligase, found in Sulfurihydrogenibium sp. (strain YO3AOP1).